Reading from the N-terminus, the 327-residue chain is Porphobilinogen deaminase (327 aa).

Cys251 carries the S-(dipyrrolylmethanemethyl)cysteine modification.

The protein belongs to the HMBS family. Dipyrromethane serves as cofactor.

It catalyses the reaction 4 porphobilinogen + H2O = hydroxymethylbilane + 4 NH4(+). It participates in porphyrin-containing compound metabolism; protoporphyrin-IX biosynthesis; coproporphyrinogen-III from 5-aminolevulinate: step 2/4. Catalyzes the tetrapolymerization of the monopyrrole porphobilinogen (PBG) into the hydroxymethylbilane pre-uroporphyrinogen in several discrete steps. The sequence is that of Porphobilinogen deaminase (HEM3) from Saccharomyces cerevisiae (strain ATCC 204508 / S288c) (Baker's yeast).